We begin with the raw amino-acid sequence, 136 residues long: Galectin-7 (136 aa).

A Galectin domain is found at 6–136; that stretch reads HKSSLPEGIR…DVQLDSVRIF (131 aa). 70–76 serves as a coordination point for a beta-D-galactoside; sequence WGREERG.

In terms of assembly, monomer. In terms of tissue distribution, mainly expressed in stratified squamous epithelium.

It localises to the cytoplasm. The protein resides in the nucleus. It is found in the secreted. In terms of biological role, could be involved in cell-cell and/or cell-matrix interactions necessary for normal growth control. Pro-apoptotic protein that functions intracellularly upstream of JNK activation and cytochrome c release. This Homo sapiens (Human) protein is Galectin-7 (LGALS7).